The primary structure comprises 115 residues: Protein translation factor SUI1 homolog (115 aa).

The protein belongs to the SUI1 family.

Functionally, probably involved in translation. This Zea mays (Maize) protein is Protein translation factor SUI1 homolog (TIF).